The following is a 396-amino-acid chain: Methylthioribose kinase (396 aa).

ATP-binding positions include Asn-44, Lys-61, and Glu-115–Leu-117. Asp-233 contributes to the substrate binding site. Asp-250–Glu-252 contacts ATP. A substrate-binding site is contributed by Arg-340.

This sequence belongs to the methylthioribose kinase family. In terms of assembly, homodimer.

It catalyses the reaction 5-(methylsulfanyl)-D-ribose + ATP = 5-(methylsulfanyl)-alpha-D-ribose 1-phosphate + ADP + H(+). The protein operates within amino-acid biosynthesis; L-methionine biosynthesis via salvage pathway; S-methyl-5-thio-alpha-D-ribose 1-phosphate from S-methyl-5'-thioadenosine (hydrolase route): step 2/2. Functionally, catalyzes the phosphorylation of methylthioribose into methylthioribose-1-phosphate. The chain is Methylthioribose kinase from Geobacillus kaustophilus (strain HTA426).